Reading from the N-terminus, the 588-residue chain is Intracellular maltogenic amylase (588 aa).

Ca(2+)-binding residues include Asn149, Ser155, Gly174, and Asp176. Positions 249 and 325 each coordinate substrate. Asp327 functions as the Nucleophile in the catalytic mechanism. Glu356 acts as the Proton donor in catalysis. Substrate is bound by residues 422-423 (HD), Asp467, and Arg471.

The protein belongs to the glycosyl hydrolase 13 family. BbmA subfamily. Monomer or homodimer; in equilibrium. Requires Ca(2+) as cofactor.

It is found in the cytoplasm. Functionally, hydrolyzes beta-cyclodextrin to maltose and glucose, soluble starch to maltose and glucose, and pullulan to panose with trace amounts of maltose and glucose. It is also able to hydrolyze acarbose. Can also exhibit a transglycosylation activity transferring glucose or maltose to another moiety of sugars by forming alpha-(1,6)- and alpha-(1,3)-glycosidic linkages upon the hydrolysis of substrate at concentrations of 5% or higher. The polypeptide is Intracellular maltogenic amylase (bbmA) (Bacillus subtilis).